Consider the following 372-residue polypeptide: NAD(P)H-quinone oxidoreductase subunit 1 (372 aa).

8 consecutive transmembrane segments (helical) span residues 29-49, 97-117, 130-150, 176-196, 204-224, 254-274, 308-328, and 347-367; these read WIPL…LVVV, WLFT…YLIV, VGIF…LMSG, LAFS…IDIV, ILGW…IAAL, FGLF…VFAI, SLGI…AVLL, and FLLP…LAFP.

Belongs to the complex I subunit 1 family. In terms of assembly, NDH-1 is composed of at least 11 different subunits.

It localises to the cellular thylakoid membrane. The enzyme catalyses a plastoquinone + NADH + (n+1) H(+)(in) = a plastoquinol + NAD(+) + n H(+)(out). It carries out the reaction a plastoquinone + NADPH + (n+1) H(+)(in) = a plastoquinol + NADP(+) + n H(+)(out). Functionally, NDH-1 shuttles electrons from an unknown electron donor, via FMN and iron-sulfur (Fe-S) centers, to quinones in the respiratory and/or the photosynthetic chain. The immediate electron acceptor for the enzyme in this species is believed to be plastoquinone. Couples the redox reaction to proton translocation, and thus conserves the redox energy in a proton gradient. The polypeptide is NAD(P)H-quinone oxidoreductase subunit 1 (Rippkaea orientalis (strain PCC 8801 / RF-1) (Cyanothece sp. (strain PCC 8801))).